Reading from the N-terminus, the 147-residue chain is Hemoglobin subunit beta (147 aa).

Val-2 is modified (N-acetylvaline). The Globin domain occupies 3–147; it reads HLTGEEKGIV…VATALAHKYH (145 aa). A Phosphothreonine modification is found at Thr-13. Position 45 is a phosphoserine (Ser-45). Lys-60 carries the N6-acetyllysine modification. His-64 contributes to the heme b binding site. Lys-83 is subject to N6-acetyllysine. His-93 contacts heme b. Position 94 is an S-nitrosocysteine (Cys-94). N6-acetyllysine is present on Lys-145.

Belongs to the globin family. As to quaternary structure, heterotetramer of two alpha chains and two beta chains. In terms of tissue distribution, red blood cells.

Involved in oxygen transport from the lung to the various peripheral tissues. The chain is Hemoglobin subunit beta (HBB) from Rhinolophus ferrumequinum (Greater horseshoe bat).